A 229-amino-acid chain; its full sequence is Peptidase E (229 aa).

Catalysis depends on charge relay system residues S120, D135, and H157.

Belongs to the peptidase S51 family.

The protein resides in the cytoplasm. It carries out the reaction Dipeptidase E catalyzes the hydrolysis of dipeptides Asp-|-Xaa. It does not act on peptides with N-terminal Glu, Asn or Gln, nor does it cleave isoaspartyl peptides.. Its function is as follows. Hydrolyzes dipeptides containing N-terminal aspartate residues. May play a role in allowing the cell to use peptide aspartate to spare carbon otherwise required for the synthesis of the aspartate family of amino acids. The polypeptide is Peptidase E (Shigella flexneri serotype 5b (strain 8401)).